Reading from the N-terminus, the 373-residue chain is Cytoplasmic tRNA 2-thiolation protein 1 (373 aa).

This sequence belongs to the TtcA family. CTU1/NCS6/ATPBD3 subfamily.

It is found in the cytoplasm. The protein operates within tRNA modification; 5-methoxycarbonylmethyl-2-thiouridine-tRNA biosynthesis. Functionally, plays a central role in 2-thiolation of mcm(5)S(2)U at tRNA wobble positions of tRNA(Lys), tRNA(Glu) and tRNA(Gln). Directly binds tRNAs and probably acts by catalyzing adenylation of tRNAs, an intermediate required for 2-thiolation. It is unclear whether it acts as a sulfurtransferase that transfers sulfur from thiocarboxylated URM1 onto the uridine of tRNAs at wobble position. In Caenorhabditis elegans, this protein is Cytoplasmic tRNA 2-thiolation protein 1.